Consider the following 212-residue polypeptide: Holliday junction branch migration complex subunit RuvA (212 aa).

Residues 1–66 (MISGLKGTLK…ERGQKLFGFL (66 aa)) are domain I. The tract at residues 67–145 (TEQDKEFFKV…KLELFLSGTS (79 aa)) is domain II. Residues 146-162 (KEPSISLSSFSETPEEA) are flexible linker. The domain III stretch occupies residues 163–212 (ALSRKREIAILGLVQLGFEEKTASKEVDKILKSSSPTDPGEIIREILKSL).

It belongs to the RuvA family. As to quaternary structure, homotetramer. Forms an RuvA(8)-RuvB(12)-Holliday junction (HJ) complex. HJ DNA is sandwiched between 2 RuvA tetramers; dsDNA enters through RuvA and exits via RuvB. An RuvB hexamer assembles on each DNA strand where it exits the tetramer. Each RuvB hexamer is contacted by two RuvA subunits (via domain III) on 2 adjacent RuvB subunits; this complex drives branch migration. In the full resolvosome a probable DNA-RuvA(4)-RuvB(12)-RuvC(2) complex forms which resolves the HJ.

The protein localises to the cytoplasm. In terms of biological role, the RuvA-RuvB-RuvC complex processes Holliday junction (HJ) DNA during genetic recombination and DNA repair, while the RuvA-RuvB complex plays an important role in the rescue of blocked DNA replication forks via replication fork reversal (RFR). RuvA specifically binds to HJ cruciform DNA, conferring on it an open structure. The RuvB hexamer acts as an ATP-dependent pump, pulling dsDNA into and through the RuvAB complex. HJ branch migration allows RuvC to scan DNA until it finds its consensus sequence, where it cleaves and resolves the cruciform DNA. The polypeptide is Holliday junction branch migration complex subunit RuvA (Leptospira borgpetersenii serovar Hardjo-bovis (strain JB197)).